The primary structure comprises 161 residues: Large ribosomal subunit protein uL16 (161 aa).

The disordered stretch occupies residues 140–161 (LNKGNYKPAKTPVTADDSESSS).

This sequence belongs to the universal ribosomal protein uL16 family. Part of the 50S ribosomal subunit.

Its function is as follows. Binds 23S rRNA and is also seen to make contacts with the A and possibly P site tRNAs. The sequence is that of Large ribosomal subunit protein uL16 from Prochlorococcus marinus (strain NATL1A).